Here is a 398-residue protein sequence, read N- to C-terminus: Phosphomevalonate dehydratase large subunit (398 aa).

(R)-5-phosphomevalonate is bound by residues Gly-48, Val-49, Ser-50, Asn-76, and Pro-77. Cys-116 is a [4Fe-4S] cluster binding site. (R)-5-phosphomevalonate is bound by residues Glu-136 and Ser-137. [4Fe-4S] cluster is bound by residues Cys-287 and Cys-342. Lys-361 provides a ligand contact to (R)-5-phosphomevalonate.

This sequence belongs to the AcnX type II large subunit family. As to quaternary structure, heterodimer composed of a large subunit (PMDh-L) and a small subunit (PMDh-S). It depends on [4Fe-4S] cluster as a cofactor.

The enzyme catalyses (R)-5-phosphomevalonate = (2E)-3-methyl-5-phosphooxypent-2-enoate + H2O. Its pathway is isoprenoid biosynthesis; isopentenyl diphosphate biosynthesis via mevalonate pathway. In terms of biological role, component of a hydro-lyase that catalyzes the dehydration of mevalonate 5-phosphate (MVA5P) to form trans-anhydromevalonate 5-phosphate (tAHMP). Involved in the archaeal mevalonate (MVA) pathway, which provides fundamental precursors for isoprenoid biosynthesis, such as isopentenyl diphosphate (IPP) and dimethylallyl diphosphate (DMAPP). The chain is Phosphomevalonate dehydratase large subunit from Methanosarcina mazei (strain ATCC BAA-159 / DSM 3647 / Goe1 / Go1 / JCM 11833 / OCM 88) (Methanosarcina frisia).